The following is a 476-amino-acid chain: Cysteine--tRNA ligase (476 aa).

Cys-28 contacts Zn(2+). Residues 30–40 (PTVYDHTHLGH) carry the 'HIGH' region motif. Cys-208, His-233, and Glu-237 together coordinate Zn(2+). A 'KMSKS' region motif is present at residues 265 to 269 (KMSKS). Lys-268 provides a ligand contact to ATP.

The protein belongs to the class-I aminoacyl-tRNA synthetase family. Requires Zn(2+) as cofactor.

Its subcellular location is the cytoplasm. It catalyses the reaction tRNA(Cys) + L-cysteine + ATP = L-cysteinyl-tRNA(Cys) + AMP + diphosphate. This is Cysteine--tRNA ligase from Methanococcus maripaludis (strain C7 / ATCC BAA-1331).